A 424-amino-acid polypeptide reads, in one-letter code: Serine hydroxymethyltransferase (424 aa).

Residues Leu-113 and 117-119 (GHL) each bind (6S)-5,6,7,8-tetrahydrofolate. Lys-222 carries the N6-(pyridoxal phosphate)lysine modification. (6S)-5,6,7,8-tetrahydrofolate is bound at residue 361 to 363 (SPF).

This sequence belongs to the SHMT family. Homodimer. Requires pyridoxal 5'-phosphate as cofactor.

It localises to the cytoplasm. The enzyme catalyses (6R)-5,10-methylene-5,6,7,8-tetrahydrofolate + glycine + H2O = (6S)-5,6,7,8-tetrahydrofolate + L-serine. Its pathway is one-carbon metabolism; tetrahydrofolate interconversion. It functions in the pathway amino-acid biosynthesis; glycine biosynthesis; glycine from L-serine: step 1/1. Catalyzes the reversible interconversion of serine and glycine with tetrahydrofolate (THF) serving as the one-carbon carrier. This reaction serves as the major source of one-carbon groups required for the biosynthesis of purines, thymidylate, methionine, and other important biomolecules. Also exhibits THF-independent aldolase activity toward beta-hydroxyamino acids, producing glycine and aldehydes, via a retro-aldol mechanism. The protein is Serine hydroxymethyltransferase of Flavobacterium psychrophilum (strain ATCC 49511 / DSM 21280 / CIP 103535 / JIP02/86).